Reading from the N-terminus, the 862-residue chain is Valine--tRNA ligase (862 aa).

A 'HIGH' region motif is present at residues 44 to 53; the sequence is NVTGSLHMGH. Cys-176, Cys-179, Cys-344, Cys-347, Cys-417, Cys-420, Cys-438, and Cys-441 together coordinate Zn(2+). Positions 528–532 match the 'KMSKS' region motif; that stretch reads KMSKS. Lys-531 contacts ATP. The stretch at 802-862 forms a coiled coil; sequence RRRQEKRLKE…RIREALSQIG (61 aa).

The protein belongs to the class-I aminoacyl-tRNA synthetase family. ValS type 1 subfamily. As to quaternary structure, monomer. It depends on Zn(2+) as a cofactor.

The protein localises to the cytoplasm. It carries out the reaction tRNA(Val) + L-valine + ATP = L-valyl-tRNA(Val) + AMP + diphosphate. Its function is as follows. Catalyzes the attachment of valine to tRNA(Val). As ValRS can inadvertently accommodate and process structurally similar amino acids such as threonine, to avoid such errors, it has a 'posttransfer' editing activity that hydrolyzes mischarged Thr-tRNA(Val) in a tRNA-dependent manner. In Thermus thermophilus (strain ATCC 27634 / DSM 579 / HB8), this protein is Valine--tRNA ligase.